We begin with the raw amino-acid sequence, 858 residues long: Phospholipase D gamma 1 (858 aa).

Residues 27-163 form the C2 domain; sequence PFATSSGSLR…CSGNRIEGLF (137 aa). Aspartate 225 provides a ligand contact to Ca(2+). The PLD phosphodiesterase 1 domain occupies 364-399; the sequence is TIYTHHQKTVIVDAEAAQNRRKIVAFVGGLDLCNGR. Active-site residues include histidine 369, lysine 371, and aspartate 376. Residue histidine 369 participates in a 1,2-diacyl-sn-glycero-3-phosphate binding. Residues histidine 405 and histidine 437 each coordinate Ca(2+). Glutamine 565 contributes to the a 1,2-diacyl-sn-glycero-3-phosphate binding site. Position 680 is a phosphoserine (serine 680). In terms of domain architecture, PLD phosphodiesterase 2 spans 704–731; that stretch reads FMIYVHSKGMVVDDEFVLIGSANINQRS. Catalysis depends on residues histidine 709, lysine 711, and aspartate 716. Residue histidine 709 coordinates a 1,2-diacyl-sn-glycero-3-phosphate. Position 772 (glutamate 772) interacts with Ca(2+).

Belongs to the phospholipase D family. C2-PLD subfamily. Ca(2+) serves as cofactor. Highly expressed in roots and flowers, moderately in stems, leaves and seedlings and low in siliques. Not detected in seeds.

It localises to the cytoplasm. Its subcellular location is the membrane. The catalysed reaction is a 1,2-diacyl-sn-glycero-3-phosphocholine + H2O = a 1,2-diacyl-sn-glycero-3-phosphate + choline + H(+). Its activity is regulated as follows. Inhibited by neomycin. Up-regulated by PIP2 binding. In terms of biological role, hydrolyzes glycerol-phospholipids at the terminal phosphodiesteric bond to generate phosphatidic acids (PA). Plays an important role in various cellular processes, including phytohormone action, vesicular trafficking, secretion, cytoskeletal arrangement, meiosis, tumor promotion, pathogenesis, membrane deterioration and senescence. Can use phosphatidylserine (PS) and phosphatidylethanolamine (PE) as substrates only in the presence of PIP2. Can use phosphatidylcholine (PC), phosphatidylglycerol (PG) or N-acylphosphatidylethanolamine (NAPE) as substrates in the presence of PE and PIP2. Involved in membrane lipid modulation under aluminum (Al) stress and negatively modulate plant tolerance to Al. This is Phospholipase D gamma 1 from Arabidopsis thaliana (Mouse-ear cress).